Reading from the N-terminus, the 513-residue chain is Dye-decolorizing peroxidase msp1 (513 aa).

The N-terminal stretch at 1-20 (MKLFSASVFAAIIASHYASA) is a signal peptide. A propeptide spanning residues 21-55 (TAHIRAPNVKPRRTNSLLTAPPQQPPLPSAQQAAS) is cleaved from the precursor. The tract at residues 33 to 52 (RTNSLLTAPPQQPPLPSAQQ) is disordered. Catalysis depends on aspartate 228, which acts as the Proton acceptor. A heme-binding site is contributed by histidine 365.

As to quaternary structure, homodimer. Requires heme b as cofactor.

The protein localises to the secreted. The catalysed reaction is Reactive Blue 5 + 2 H2O2 = 2,2'-disulfonyl azobenzene + 3-[(4-amino-6-chloro-1,3,5-triazin-2-yl)amino]benzenesulfonate + phthalate + 2 H2O + 2 H(+). It carries out the reaction 2 a phenolic donor + H2O2 = 2 a phenolic radical donor + 2 H2O. Its function is as follows. Manganese-independent peroxidase that is able to convert a large number of compounds, but its physiological substrate is not known. In addition to classic peroxidase substrates (e.g. 2,6-dimethoxyphenol), oxidizes dyes such as Reactive Blue 5. Also degrades beta-carotene. This is Dye-decolorizing peroxidase msp1 from Mycetinis scorodonius (Garlic mushroom).